The sequence spans 308 residues: Transaldolase (308 aa).

Residue Lys-125 is the Schiff-base intermediate with substrate of the active site.

The protein belongs to the transaldolase family. Type 1 subfamily. As to quaternary structure, homodimer.

It is found in the cytoplasm. It carries out the reaction D-sedoheptulose 7-phosphate + D-glyceraldehyde 3-phosphate = D-erythrose 4-phosphate + beta-D-fructose 6-phosphate. The protein operates within carbohydrate degradation; pentose phosphate pathway; D-glyceraldehyde 3-phosphate and beta-D-fructose 6-phosphate from D-ribose 5-phosphate and D-xylulose 5-phosphate (non-oxidative stage): step 2/3. Functionally, transaldolase is important for the balance of metabolites in the pentose-phosphate pathway. This is Transaldolase from Pseudomonas fluorescens (strain Pf0-1).